Here is a 138-residue protein sequence, read N- to C-terminus: Putative pre-16S rRNA nuclease (138 aa).

This sequence belongs to the YqgF nuclease family.

The protein resides in the cytoplasm. Functionally, could be a nuclease involved in processing of the 5'-end of pre-16S rRNA. In Caldicellulosiruptor bescii (strain ATCC BAA-1888 / DSM 6725 / KCTC 15123 / Z-1320) (Anaerocellum thermophilum), this protein is Putative pre-16S rRNA nuclease.